We begin with the raw amino-acid sequence, 493 residues long: Trans-aconitate decarboxylase 1 (493 aa).

The disordered stretch occupies residues Met1 to Ser22.

The protein belongs to the class-II fumarase/aspartase family.

The protein localises to the cytoplasm. Its subcellular location is the cytosol. It is found in the nucleus. It carries out the reaction trans-aconitate + H(+) = itaconate + CO2. The protein operates within secondary metabolite biosynthesis. Functionally, trans-aconitate decarboxylase; part of the gene cluster that mediates the biosynthesis of itaconic acid and 2-hydroxyparaconate. Cis-aconitate is secreted by the mitochondrial tricarboxylate transporter MTT1. In the cytosol cis-aconitate is converted into trans-aconitate via isomerization by the aconitate-delta-isomerase ADI1. Decarboxylation of trans-aconitate by the trans-aconitate decarboxylase TAD1 then leads then to the production of itaconic acid. The cytochrome P450 monooxygenase CYP3 further converts itaconate to 2-hydroxyparaconate via oxidation of the double bond, leading to a transient epoxide, which can subsequently be lactonized to produce 2-hydroxyparaconate. Secretion of itaconate and possibly 2-hydroxyparaconate into the medium is mediated by the major facilitator ITP1. The glyoxalase domain-containing protein RDO1 is not involved in the biosynthesis of itaconate and 2-hydroxyparaconate, however, it might play a role in the further conversion of 2-hydroxyparaconate to itatartarate. This chain is Trans-aconitate decarboxylase 1, found in Mycosarcoma maydis (Corn smut fungus).